The chain runs to 520 residues: Genome polyprotein (520 aa).

N-acetylserine; by host is present on S2. Positions 2 to 23 (STNPKPQRKTKRNTNRRPQDVK) are interaction with STAT1. An interaction with EIF2AK2/PKR region spans residues 2–58 (STNPKPQRKTKRNTNRRPQDVKFPGGGQIVGGVYLLTRRGPRLGVRATRKTSERSQP). An interaction with DDX3X region spans residues 2-59 (STNPKPQRKTKRNTNRRPQDVKFPGGGQIVGGVYLLTRRGPRLGVRATRKTSERSQPR). The interval 2–75 (STNPKPQRKT…PKARRPEGRA (74 aa)) is disordered. Topologically, residues 2–168 (STNPKPQRKT…EDGVNYATGN (167 aa)) are cytoplasmic. Short sequence motifs (nuclear localization signal) lie at residues 5–13 (PKPQRKTKR) and 38–43 (TRRGPR). Residues 7–16 (PQRKTKRNTN) are compositionally biased toward basic residues. S53 is modified (phosphoserine; by host). Short sequence motifs (nuclear localization signal) lie at residues 58–64 (PRGRRQP) and 66–71 (PKARRP). Positions 58 to 68 (PRGRRQPIPKA) are enriched in basic residues. Phosphoserine; by host is present on S99. An important for endoplasmic reticulum and mitochondrial localization region spans residues 112-152 (PRRRSRNLGKVIDTLTCGFADLMGYIPLVGAPLGGASRALA). A Phosphoserine; by host PKA modification is found at S116. Residues 122–173 (VIDTLTCGFADLMGYIPLVGAPLGGASRALAHGVRVLEDGVNYATGNLPGCS) are interaction with APOA2. The tract at residues 164 to 167 (YATG) is important for lipid droplets localization. Residues 169–189 (LPGCSFSIFLSALMSCLTTPA) traverse the membrane as a helical segment. Positions 178-191 (LSALMSCLTTPASA) are cleaved as a propeptide — ER anchor for the core protein, removed in mature form by host signal peptidase. Over 190-358 (SAYEVRNVSG…AGAHWGVLAG (169 aa)) the chain is Lumenal. N196, N209, N234, and N250 each carry an N-linked (GlcNAc...) asparagine; by host glycan. The tract at residues 265–296 (LVGAATLCSAMYVGDLCGSVFLVSQLFTFSPR) is important for fusion. The N-linked (GlcNAc...) asparagine; by host glycan is linked to N305. The chain crosses the membrane as a helical span at residues 359–379 (LAYYSMVGNWAKVLIVMLLFA). The Lumenal segment spans residues 380-520 (GVDGANTHTV…TPSPVVVGTT (141 aa)). The HVR1 stretch occupies residues 385-411 (NTHTVGGTEGFATQRLTSLFALGPSQK). Residue N418 is glycosylated (N-linked (GlcNAc...) asparagine; by host). 3 N-linked (GlcNAc...) (high mannose) asparagine; by host glycosylation sites follow: N424, N431, and N449. An intrachain disulfide couples C453 to C460. Residues 474 to 479 (TYAEPS) are HVR2. The tract at residues 480-493 (ISEQRPYCWHYAPR) is CD81-binding 1. 2 disulfide bridges follow: C487-C495 and C504-C509.

The protein belongs to the hepacivirus polyprotein family. As to quaternary structure, homooligomer. Interacts with E1 (via C-terminus). Interacts with the non-structural protein 5A. Interacts (via N-terminus) with host STAT1 (via SH2 domain); this interaction results in decreased STAT1 phosphorylation and ubiquitin-mediated proteasome-dependent STAT1 degradation, leading to decreased IFN-stimulated gene transcription. Interacts with host STAT3; this interaction constitutively activates STAT3. Interacts with host LTBR receptor. Interacts with host TNFRSF1A receptor and possibly induces apoptosis. Interacts with host HNRPK. Interacts with host YWHAE. Interacts with host UBE3A/E6AP. Interacts with host DDX3X. Interacts with host APOA2. Interacts with host RXRA protein. Interacts with host SP110 isoform 3/Sp110b; this interaction sequesters the transcriptional corepressor SP110 away from the nucleus. Interacts with host CREB3 nuclear transcription protein; this interaction triggers cell transformation. Interacts with host ACY3. Interacts with host C1QR1. Interacts with host RBM24; this interaction, which enhances the interaction of the mature core protein with 5'-UTR, may inhibit viral translation and favor replication. Interacts with host EIF2AK2/PKR; this interaction induces the autophosphorylation of EIF2AK2. Part of the viral assembly initiation complex composed of NS2, E1, E2, NS3, NS4A, NS5A and the mature core protein. In terms of assembly, forms a heterodimer with envelope glycoprotein E2. Interacts with mature core protein. Interacts with protease NS2. The heterodimer E1/E2 interacts with host CLDN1; this interaction plays a role in viral entry into host cell. Interacts with host SPSB2 (via C-terminus). Part of the viral assembly initiation complex composed of NS2, E1, E2, NS3, NS4A, NS5A and the mature core protein. Forms a heterodimer with envelope glycoprotein E1. Interacts with host CD81 and SCARB1 receptors; these interactions play a role in viral entry into host cell. Interacts with host EIF2AK2/PKR; this interaction inhibits EIF2AK2 and probably allows the virus to evade the innate immune response. Interacts with host CD209/DC-SIGN and CLEC4M/DC-SIGNR. Interact with host SPCS1; this interaction is essential for viral particle assembly. Interacts with protease NS2. The heterodimer E1/E2 interacts with host CLDN1; this interaction plays a role in viral entry into host cell. Part of the viral assembly initiation complex composed of NS2, E1, E2, NS3, NS4A, NS5A and the mature core protein. In terms of processing, specific enzymatic cleavages in vivo yield mature proteins. The structural proteins, core, E1, E2 and p7 are produced by proteolytic processing by host signal peptidases. The core protein precursor is synthesized as a 23 kDa, which is retained in the ER membrane through the hydrophobic signal peptide. Cleavage by the signal peptidase releases the 21 kDa mature core protein. The cleavage of the core protein precursor occurs between aminoacids 176 and 188 but the exact cleavage site is not known. Some degraded forms of the core protein appear as well during the course of infection. The other proteins (p7, NS2, NS3, NS4A, NS4B, NS5A and NS5B) are cleaved by the viral proteases. Autoprocessing between NS2 and NS3 is mediated by the NS2 cysteine protease catalytic domain and regulated by the NS3 N-terminal domain. Post-translationally, phosphorylated by host PKC and PKA. Ubiquitinated; mediated by UBE3A and leading to core protein subsequent proteasomal degradation. In terms of processing, highly N-glycosylated.

It localises to the host endoplasmic reticulum membrane. It is found in the host mitochondrion membrane. Its subcellular location is the virion. The protein resides in the host cytoplasm. The protein localises to the host nucleus. It localises to the host lipid droplet. It is found in the virion membrane. In terms of biological role, packages viral RNA to form a viral nucleocapsid, and promotes virion budding. Participates in the viral particle production as a result of its interaction with the non-structural protein 5A. Binds RNA and may function as a RNA chaperone to induce the RNA structural rearrangements taking place during virus replication. Modulates viral translation initiation by interacting with viral IRES and 40S ribosomal subunit. Affects various cell signaling pathways, host immunity and lipid metabolism. Prevents the establishment of cellular antiviral state by blocking the interferon-alpha/beta (IFN-alpha/beta) and IFN-gamma signaling pathways and by blocking the formation of phosphorylated STAT1 and promoting ubiquitin-mediated proteasome-dependent degradation of STAT1. Activates STAT3 leading to cellular transformation. Regulates the activity of cellular genes, including c-myc and c-fos. May repress the promoter of p53, and sequester CREB3 and SP110 isoform 3/Sp110b in the cytoplasm. Represses cell cycle negative regulating factor CDKN1A, thereby interrupting an important check point of normal cell cycle regulation. Targets transcription factors involved in the regulation of inflammatory responses and in the immune response: suppresses TNF-induced NF-kappa-B activation, and activates AP-1. Binds to dendritic cells (DCs) via C1QR1, resulting in down-regulation of T-lymphocytes proliferation. Alters lipid metabolism by interacting with hepatocellular proteins involved in lipid accumulation and storage. Induces up-regulation of FAS promoter activity, and thereby contributes to the increased triglyceride accumulation in hepatocytes (steatosis). Functionally, forms a heterodimer with envelope glycoprotein E2, which mediates virus attachment to the host cell, virion internalization through clathrin-dependent endocytosis and fusion with host membrane. Fusion with the host cell is most likely mediated by both E1 and E2, through conformational rearrangements of the heterodimer required for fusion rather than a classical class II fusion mechanism. E1/E2 heterodimer binds host apolipoproteins such as APOB and ApoE thereby forming a lipo-viro-particle (LVP). APOE associated to the LVP allows the initial virus attachment to cell surface receptors such as the heparan sulfate proteoglycans (HSPGs), syndecan-1 (SDC1), syndecan-1 (SDC2), the low-density lipoprotein receptor (LDLR) and scavenger receptor class B type I (SCARB1). The cholesterol transfer activity of SCARB1 allows E2 exposure and binding of E2 to SCARB1 and the tetraspanin CD81. E1/E2 heterodimer binding on CD81 activates the epithelial growth factor receptor (EGFR) signaling pathway. Diffusion of the complex E1-E2-EGFR-SCARB1-CD81 to the cell lateral membrane allows further interaction with Claudin 1 (CLDN1) and occludin (OCLN) to finally trigger HCV entry. Forms a heterodimer with envelope glycoprotein E1, which mediates virus attachment to the host cell, virion internalization through clathrin-dependent endocytosis and fusion with host membrane. Fusion with the host cell is most likely mediated by both E1 and E2, through conformational rearrangements of the heterodimer required for fusion rather than a classical class II fusion mechanism. The interaction between envelope glycoprotein E2 and host apolipoprotein E/APOE allows the proper assembly, maturation and infectivity of the viral particles. This interaction is probably promoted via the up-regulation of cellular autophagy by the virus. E1/E2 heterodimer binds host apolipoproteins such as APOB and APOE thereby forming a lipo-viro-particle (LVP). APOE associated to the LVP allows the initial virus attachment to cell surface receptors such as the heparan sulfate proteoglycans (HSPGs), syndecan-1 (SDC1), syndecan-1 (SDC2), the low-density lipoprotein receptor (LDLR) and scavenger receptor class B type I (SCARB1). The cholesterol transfer activity of SCARB1 allows E2 exposure and binding of E2 to SCARB1 and the tetraspanin CD81. E1/E2 heterodimer binding on CD81 activates the epithelial growth factor receptor (EGFR) signaling pathway. Diffusion of the complex E1-E2-EGFR-SCARB1-CD81 to the cell lateral membrane allows further interaction with Claudin 1 (CLDN1) and occludin (OCLN) to finally trigger HCV entry. Inhibits host EIF2AK2/PKR activation, preventing the establishment of an antiviral state. Viral ligand for CD209/DC-SIGN and CLEC4M/DC-SIGNR, which are respectively found on dendritic cells (DCs), and on liver sinusoidal endothelial cells and macrophage-like cells of lymph node sinuses. These interactions allow the capture of circulating HCV particles by these cells and subsequent facilitated transmission to permissive cells such as hepatocytes and lymphocyte subpopulations. This is Genome polyprotein from Hepatitis C virus (isolate HCV-KF) (HCV).